Here is a 403-residue protein sequence, read N- to C-terminus: Cysteine desulfurase IscS (403 aa).

Residues 75-76 (AT), asparagine 155, glutamine 183, and 203-205 (SAH) each bind pyridoxal 5'-phosphate. N6-(pyridoxal phosphate)lysine is present on lysine 206. Pyridoxal 5'-phosphate is bound at residue threonine 243. Residue cysteine 328 is the Cysteine persulfide intermediate of the active site. A [2Fe-2S] cluster-binding site is contributed by cysteine 328.

It belongs to the class-V pyridoxal-phosphate-dependent aminotransferase family. NifS/IscS subfamily. In terms of assembly, homodimer. Forms a heterotetramer with IscU, interacts with other sulfur acceptors. Pyridoxal 5'-phosphate is required as a cofactor.

It localises to the cytoplasm. The catalysed reaction is (sulfur carrier)-H + L-cysteine = (sulfur carrier)-SH + L-alanine. It functions in the pathway cofactor biosynthesis; iron-sulfur cluster biosynthesis. Its function is as follows. Master enzyme that delivers sulfur to a number of partners involved in Fe-S cluster assembly, tRNA modification or cofactor biosynthesis. Catalyzes the removal of elemental sulfur atoms from cysteine to produce alanine. Functions as a sulfur delivery protein for Fe-S cluster synthesis onto IscU, an Fe-S scaffold assembly protein, as well as other S acceptor proteins. This is Cysteine desulfurase IscS from Psychromonas ingrahamii (strain DSM 17664 / CCUG 51855 / 37).